A 118-amino-acid polypeptide reads, in one-letter code: Basic phospholipase A2 PA-11 (118 aa).

7 disulfide bridges follow: C11/C71, C27/C117, C29/C45, C44/C98, C51/C91, C60/C84, and C78/C89. Ca(2+) contacts are provided by Y28, G30, and G32. Residue H48 is part of the active site. A Ca(2+)-binding site is contributed by D49. Residue D92 is part of the active site.

The protein belongs to the phospholipase A2 family. Group I subfamily. D49 sub-subfamily. It depends on Ca(2+) as a cofactor. Expressed by the venom gland.

It is found in the secreted. The enzyme catalyses a 1,2-diacyl-sn-glycero-3-phosphocholine + H2O = a 1-acyl-sn-glycero-3-phosphocholine + a fatty acid + H(+). In terms of biological role, PLA2 catalyzes the calcium-dependent hydrolysis of the 2-acyl groups in 3-sn-phosphoglycerides. The sequence is that of Basic phospholipase A2 PA-11 from Pseudechis australis (Mulga snake).